A 59-amino-acid chain; its full sequence is Large ribosomal subunit protein bL32 (59 aa).

The segment at 1 to 59 (MAVQQNKKSPSKRGMHRSHDALTAPALFVDSTTGEVHRPHHISPNGMYRGRKVVKAKGE) is disordered. Basic residues predominate over residues 49–59 (RGRKVVKAKGE).

The protein belongs to the bacterial ribosomal protein bL32 family.

This is Large ribosomal subunit protein bL32 from Neisseria gonorrhoeae (strain ATCC 700825 / FA 1090).